A 345-amino-acid chain; its full sequence is Probable S-adenosylmethionine carrier 2, chloroplastic (345 aa).

The N-terminal 31 residues, Met-1–Ser-31, are a transit peptide targeting the chloroplast. 3 Solcar repeats span residues Arg-76–Lys-148, Leu-157–Gly-239, and Glu-252–Ile-334. 5 helical membrane-spanning segments follow: residues Leu-82 to Ile-102, Tyr-121 to Val-141, Asn-156 to Val-176, Ala-254 to Ile-274, and Gly-309 to Glu-329.

The protein belongs to the mitochondrial carrier (TC 2.A.29) family. Expressed at low levels in seedlings, leaves, flowers, stems and roots.

The protein localises to the plastid. It is found in the chloroplast membrane. In terms of biological role, probable S-adenosylmethionine (SAM) transporter able to catalyze both uniport and exchange reactions through membranes. In Arabidopsis thaliana (Mouse-ear cress), this protein is Probable S-adenosylmethionine carrier 2, chloroplastic (SAMC2).